Consider the following 448-residue polypeptide: N-succinylarginine dihydrolase (448 aa).

Residues 20 to 29 (AGLLFGNEAS), Asn111, and 138 to 139 (HR) contribute to the substrate site. Residue Glu175 is part of the active site. Arg213 serves as a coordination point for substrate. His249 is an active-site residue. Substrate-binding residues include Asp251 and Asn360. Cys366 functions as the Nucleophile in the catalytic mechanism.

This sequence belongs to the succinylarginine dihydrolase family. As to quaternary structure, homodimer.

The catalysed reaction is N(2)-succinyl-L-arginine + 2 H2O + 2 H(+) = N(2)-succinyl-L-ornithine + 2 NH4(+) + CO2. The protein operates within amino-acid degradation; L-arginine degradation via AST pathway; L-glutamate and succinate from L-arginine: step 2/5. Catalyzes the hydrolysis of N(2)-succinylarginine into N(2)-succinylornithine, ammonia and CO(2). This Shigella dysenteriae serotype 1 (strain Sd197) protein is N-succinylarginine dihydrolase.